Here is a 354-residue protein sequence, read N- to C-terminus: MEKFKAAMLLGSVGDALGYRNVCKENSTVGMKIQEELQRSGGLDHLVLSPGEWPVSDNTIMHIATAEALTTDYWCLDDLYREMVRCYVEIVEKLPERRPDPATIEGCAQLKPNNYLLAWHTPFNEKGSGFGAATKAMCIGLRYWKPERLETLIEVSVECGRMTHNHPTGFLGSLCTALFVSFAAQGKPLVQWGRDMLRAVPLAEEYCRKTIRHTAEYQEHWFYFEAKWQFYLEERKISKDSENKAIFPDNYDAEEREKTYRKWSSEGRGGRRGHDAPMIAYDALLAAGNSWTELCHRAMFHGGESAATGTIAGCLFGLLYGLDLVPKGLYQDLEDKEKLEDLGAALYRLSTEEK.

Ser27 is modified (phosphoserine).

This sequence belongs to the ADP-ribosylglycohydrolase family.

Its subcellular location is the cytoplasm. The protein resides in the myofibril. The protein localises to the sarcomere. Functionally, required for myofibril assembly and outgrowth of the cardiac chambers in the developing heart. Appears to be catalytically inactive, showing no activity against O-acetyl-ADP-ribose. The chain is Inactive ADP-ribosyltransferase ARH2 (ADPRHL1) from Homo sapiens (Human).